The primary structure comprises 137 residues: Large ribosomal subunit protein uL16 (137 aa).

It belongs to the universal ribosomal protein uL16 family. In terms of assembly, part of the 50S ribosomal subunit.

Its function is as follows. Binds 23S rRNA and is also seen to make contacts with the A and possibly P site tRNAs. The polypeptide is Large ribosomal subunit protein uL16 (Rhodopseudomonas palustris (strain BisA53)).